The primary structure comprises 309 residues: Early nodulin-75 (309 aa).

Positions 1-25 (MTSVLHYSLLLLLLGVVILTTPVLA) are cleaved as a signal peptide. The segment covering 56-67 (PPPVHHPPPEYQ) has biased composition (pro residues). Positions 56–309 (PPPVHHPPPE…YGRYPPSKKN (254 aa)) are disordered. 2 stretches are compositionally biased toward basic and acidic residues: residues 81-210 (PHEK…EKPP) and 219-247 (KPPHEKPPPEYQPPHEKPPPEHQPPHEKP). Composition is skewed to pro residues over residues 248–276 (PPVYPPPYEKPPPVYEPPYEKPPPVVYPP) and 283–302 (IYEPPPLEKPPVYNPPPYGR).

Belongs to the nodulin 75 family.

Involved in early stages of root nodule development. In Glycine max (Soybean), this protein is Early nodulin-75 (ENOD2A).